The chain runs to 209 residues: Imidazole glycerol phosphate synthase subunit HisH (209 aa).

A Glutamine amidotransferase type-1 domain is found at 1-205 (MIAIIDYGMG…KGVVKQWKSS (205 aa)). C79 functions as the Nucleophile in the catalytic mechanism. Residues H180 and E182 contribute to the active site.

In terms of assembly, heterodimer of HisH and HisF.

It localises to the cytoplasm. The catalysed reaction is 5-[(5-phospho-1-deoxy-D-ribulos-1-ylimino)methylamino]-1-(5-phospho-beta-D-ribosyl)imidazole-4-carboxamide + L-glutamine = D-erythro-1-(imidazol-4-yl)glycerol 3-phosphate + 5-amino-1-(5-phospho-beta-D-ribosyl)imidazole-4-carboxamide + L-glutamate + H(+). It catalyses the reaction L-glutamine + H2O = L-glutamate + NH4(+). Its pathway is amino-acid biosynthesis; L-histidine biosynthesis; L-histidine from 5-phospho-alpha-D-ribose 1-diphosphate: step 5/9. Its function is as follows. IGPS catalyzes the conversion of PRFAR and glutamine to IGP, AICAR and glutamate. The HisH subunit catalyzes the hydrolysis of glutamine to glutamate and ammonia as part of the synthesis of IGP and AICAR. The resulting ammonia molecule is channeled to the active site of HisF. This Bacillus cytotoxicus (strain DSM 22905 / CIP 110041 / 391-98 / NVH 391-98) protein is Imidazole glycerol phosphate synthase subunit HisH.